The chain runs to 470 residues: Ribulose bisphosphate carboxylase large chain (470 aa).

Asn115 and Thr165 together coordinate substrate. Catalysis depends on Lys167, which acts as the Proton acceptor. Lys169 is a substrate binding site. 3 residues coordinate Mg(2+): Lys193, Asp195, and Glu196. Position 193 is an N6-carboxylysine (Lys193). Catalysis depends on His286, which acts as the Proton acceptor. Substrate is bound by residues Arg287, His319, and Ser371.

It belongs to the RuBisCO large chain family. Type I subfamily. Heterohexadecamer of 8 large chains and 8 small chains. It depends on Mg(2+) as a cofactor.

It localises to the carboxysome. It carries out the reaction 2 (2R)-3-phosphoglycerate + 2 H(+) = D-ribulose 1,5-bisphosphate + CO2 + H2O. The catalysed reaction is D-ribulose 1,5-bisphosphate + O2 = 2-phosphoglycolate + (2R)-3-phosphoglycerate + 2 H(+). In terms of biological role, ruBisCO catalyzes two reactions: the carboxylation of D-ribulose 1,5-bisphosphate, the primary event in carbon dioxide fixation, as well as the oxidative fragmentation of the pentose substrate in the photorespiration process. Both reactions occur simultaneously and in competition at the same active site. This Prochlorococcus marinus (strain NATL1A) protein is Ribulose bisphosphate carboxylase large chain.